A 285-amino-acid polypeptide reads, in one-letter code: Bifunctional protein FolD (285 aa).

NADP(+)-binding positions include Gly166–Ser168, Ser191, and Thr232.

It belongs to the tetrahydrofolate dehydrogenase/cyclohydrolase family. In terms of assembly, homodimer.

It catalyses the reaction (6R)-5,10-methylene-5,6,7,8-tetrahydrofolate + NADP(+) = (6R)-5,10-methenyltetrahydrofolate + NADPH. The enzyme catalyses (6R)-5,10-methenyltetrahydrofolate + H2O = (6R)-10-formyltetrahydrofolate + H(+). Its pathway is one-carbon metabolism; tetrahydrofolate interconversion. In terms of biological role, catalyzes the oxidation of 5,10-methylenetetrahydrofolate to 5,10-methenyltetrahydrofolate and then the hydrolysis of 5,10-methenyltetrahydrofolate to 10-formyltetrahydrofolate. This chain is Bifunctional protein FolD, found in Chloroflexus aggregans (strain MD-66 / DSM 9485).